A 94-amino-acid polypeptide reads, in one-letter code: Pyrimidine/purine nucleoside phosphorylase (94 aa).

This sequence belongs to the nucleoside phosphorylase PpnP family.

It carries out the reaction a purine D-ribonucleoside + phosphate = a purine nucleobase + alpha-D-ribose 1-phosphate. It catalyses the reaction adenosine + phosphate = alpha-D-ribose 1-phosphate + adenine. The enzyme catalyses cytidine + phosphate = cytosine + alpha-D-ribose 1-phosphate. The catalysed reaction is guanosine + phosphate = alpha-D-ribose 1-phosphate + guanine. It carries out the reaction inosine + phosphate = alpha-D-ribose 1-phosphate + hypoxanthine. It catalyses the reaction thymidine + phosphate = 2-deoxy-alpha-D-ribose 1-phosphate + thymine. The enzyme catalyses uridine + phosphate = alpha-D-ribose 1-phosphate + uracil. The catalysed reaction is xanthosine + phosphate = alpha-D-ribose 1-phosphate + xanthine. Functionally, catalyzes the phosphorolysis of diverse nucleosides, yielding D-ribose 1-phosphate and the respective free bases. Can use uridine, adenosine, guanosine, cytidine, thymidine, inosine and xanthosine as substrates. Also catalyzes the reverse reactions. This chain is Pyrimidine/purine nucleoside phosphorylase, found in Pseudomonas putida (strain GB-1).